The sequence spans 560 residues: Zinc finger protein 619 (560 aa).

10 C2H2-type zinc fingers span residues 188–210 (YKCG…QRVH), 216–238 (YTCK…QKIH), 244–266 (YSCE…QKLH), 272–294 (YECT…QRIH), 300–322 (FKCK…ERIH), 328–350 (YECK…QRIH), 356–378 (YECK…QRFH), 384–406 (YKCN…QRIH), 412–434 (YECQ…QRVH), and 440–462 (YECK…QKWH).

This sequence belongs to the krueppel C2H2-type zinc-finger protein family.

The protein resides in the nucleus. Its function is as follows. May be involved in transcriptional regulation. This chain is Zinc finger protein 619 (ZNF619), found in Homo sapiens (Human).